Here is a 169-residue protein sequence, read N- to C-terminus: Peptide deformylase 1 (169 aa).

The Fe cation site is built by Cys92 and His134. Glu135 is an active-site residue. Fe cation is bound at residue His138.

The protein belongs to the polypeptide deformylase family. The cofactor is Fe(2+).

The catalysed reaction is N-terminal N-formyl-L-methionyl-[peptide] + H2O = N-terminal L-methionyl-[peptide] + formate. Functionally, removes the formyl group from the N-terminal Met of newly synthesized proteins. Requires at least a dipeptide for an efficient rate of reaction. N-terminal L-methionine is a prerequisite for activity but the enzyme has broad specificity at other positions. This Ralstonia nicotianae (strain ATCC BAA-1114 / GMI1000) (Ralstonia solanacearum) protein is Peptide deformylase 1.